The following is a 332-amino-acid chain: Heterogeneous nuclear ribonucleoprotein A/B (332 aa).

Residues 1–66 (MSEAGEEQPM…DQINASKNEE (66 aa)) are disordered. Over residues 29–49 (GRGWTGAAAGAGGATAAPPSG) the composition is skewed to low complexity. 2 RRM domains span residues 69-154 (GKMF…PVKK) and 153-233 (KKIF…QPKE). Position 81 is a phosphoserine (Ser81). Residues Lys130 and Lys203 each participate in a glycyl lysine isopeptide (Lys-Gly) (interchain with G-Cter in SUMO2) cross-link. Lys215 is modified (N6-acetyllysine). The interval 235–268 (YQQQQYGSGGRGNRNRGNRGSGGGGGGGGQSQSW) is disordered. Ser242 carries the phosphoserine modification. Arg245 is subject to Dimethylated arginine; alternate. Arg245 carries the omega-N-methylarginine; alternate modification. Omega-N-methylarginine is present on residues Arg250, Gly251, Arg253, and Gly254. Gly residues predominate over residues 253–264 (RGSGGGGGGGGQ). 2 positions are modified to phosphoserine: Ser255 and Gly256. 3 positions are modified to N6-acetyllysine: Gly271, Tyr272, and Lys318. Positions 311-332 (QGSTNYGKSQRRGGHQNNYKPY) are disordered. Arg322 bears the Dimethylated arginine; alternate mark. An Omega-N-methylarginine; alternate modification is found at Arg322. Position 322 is an asymmetric dimethylarginine; alternate (Arg322).

As to quaternary structure, identified in a IGF2BP1-dependent mRNP granule complex containing untranslated mRNAs. Interacts with APOBEC1. Dimethylation at Arg-322 is probably asymmetric. As to expression, ubiquitous.

Its subcellular location is the nucleus. The protein resides in the cytoplasm. Functionally, binds single-stranded RNA. Has a high affinity for G-rich and U-rich regions of hnRNA. Also binds to APOB mRNA transcripts around the RNA editing site. This Homo sapiens (Human) protein is Heterogeneous nuclear ribonucleoprotein A/B (HNRNPAB).